A 113-amino-acid chain; its full sequence is Putative pterin-4-alpha-carbinolamine dehydratase (113 aa).

Belongs to the pterin-4-alpha-carbinolamine dehydratase family.

It carries out the reaction (4aS,6R)-4a-hydroxy-L-erythro-5,6,7,8-tetrahydrobiopterin = (6R)-L-erythro-6,7-dihydrobiopterin + H2O. The protein is Putative pterin-4-alpha-carbinolamine dehydratase of Chlorobium limicola (strain DSM 245 / NBRC 103803 / 6330).